Consider the following 535-residue polypeptide: Beta-amylase (535 aa).

A propeptide spans 1–2 (ME) (removed in mature form). Val-3 bears the N-acetylvaline mark. Substrate contacts are provided by Asp-51, His-91, and Asp-99. The active-site Proton donor is the Glu-184. Residues Lys-293, His-298, and Thr-340 each coordinate substrate. The Proton acceptor role is filled by Glu-378. Residues 379 to 380 (NA) and Arg-418 each bind substrate. 3 tandem repeats follow at residues 489 to 499 (GPTGGMGGQAE), 500 to 510 (GPTCGMGGQVK), and 511 to 521 (GPTGGMGGQAE). The 4 X 11 AA tandem repeats stretch occupies residues 489–532 (GPTGGMGGQAEGPTCGMGGQVKGPTGGMGGQAEDPTSGMGGELP). Residues 490 to 535 (PTGGMGGQAEGPTCGMGGQVKGPTGGMGGQAEDPTSGMGGELPATM) constitute a propeptide, removed in mature form. The disordered stretch occupies residues 513 to 535 (TGGMGGQAEDPTSGMGGELPATM). A 4; approximate repeat occupies 522 to 532 (DPTSGMGGELP).

It belongs to the glycosyl hydrolase 14 family. Monomer. In terms of tissue distribution, endosperm.

It carries out the reaction Hydrolysis of (1-&gt;4)-alpha-D-glucosidic linkages in polysaccharides so as to remove successive maltose units from the non-reducing ends of the chains.. Functionally, catalyzes the liberation of maltose from 1,4-alpha-D glucans. The polypeptide is Beta-amylase (Hordeum vulgare subsp. spontaneum (Wild barley)).